A 71-amino-acid polypeptide reads, in one-letter code: Phosphatidylinositol N-acetylglucosaminyltransferase subunit Y (71 aa).

The Cytoplasmic segment spans residues 1–5 (MIRSL). Residues 6-26 (PTMTVLIPLVSLAGLLYSASV) form a helical membrane-spanning segment. The Lumenal portion of the chain corresponds to 27-44 (EEGFPEGCTSASSLCFYS). Residues 45–65 (LLLPVTVPVYVFFHLWTWMGL) form a helical membrane-spanning segment. At 66–71 (KLFRHN) the chain is on the cytoplasmic side.

Component of the glycosylphosphatidylinositol-N-acetylglucosaminyltransferase (GPI-GnT) complex composed at least by PIGA, PIGC, PIGH, PIGP, PIGQ, PIGY and DPM2. Interacts directly with PIGA; this interaction regulates glycosylphosphatidylinositol-N-acetylglucosaminyltransferase activity. Does not interact with Ras proteins.

It is found in the endoplasmic reticulum membrane. It functions in the pathway glycolipid biosynthesis; glycosylphosphatidylinositol-anchor biosynthesis. Its function is as follows. Part of the glycosylphosphatidylinositol-N-acetylglucosaminyltransferase (GPI-GnT) complex that catalyzes the transfer of N-acetylglucosamine from UDP-N-acetylglucosamine to phosphatidylinositol and participates in the first step of GPI biosynthesis. May act by regulating the catalytic subunit PIGA. This is Phosphatidylinositol N-acetylglucosaminyltransferase subunit Y from Mus musculus (Mouse).